The sequence spans 426 residues: Tetracenomycin polyketide synthase ketoacyl synthase alpha subunit (426 aa).

A Ketosynthase family 3 (KS3) domain is found at 6-420 (EKRVVITGIG…GFQSAAVLAR (415 aa)). Active-site for beta-ketoacyl synthase activity residues include C173, H313, and H350.

It belongs to the thiolase-like superfamily. Beta-ketoacyl-ACP synthases family. In terms of assembly, the tetracenomycin polyketide synthase (TCM PKS) is composed of a ketosynthase complex (TcmKL), an acyl carrier protein (TcmM), a cyclase (TcmN) and a probable second cyclase (TcmJ). TcmK and TcmL form a heterodimeric complex.

The enzyme catalyses 10 malonyl-CoA + 8 H(+) = tetracenomycin F2 + 10 CO2 + 10 CoA + 2 H2O. Its pathway is antibiotic biosynthesis; tetracenomycin C biosynthesis. Its function is as follows. Involved in the biosynthesis of tetracenomycin C (TCM C). Part of a type II polyketide synthase (PKS) that catalyzes the synthesis of tetracenomycin F2 (TCM F2), a precursor of TCM C, from malonyl-CoA. TcmK and TcmL form a heterodimeric alpha-beta complex that catalyzes the condensation reactions between the growing acyl-enzyme chain and the malonyl-CoA extender units. This Streptomyces glaucescens protein is Tetracenomycin polyketide synthase ketoacyl synthase alpha subunit.